The chain runs to 306 residues: Homoserine O-acetyltransferase (306 aa).

Cys-142 functions as the Acyl-thioester intermediate in the catalytic mechanism. Substrate contacts are provided by Lys-163 and Ser-192. The active-site Proton acceptor is His-235. Residue Glu-237 is part of the active site. Residue Arg-249 participates in substrate binding.

This sequence belongs to the MetA family.

It localises to the cytoplasm. It catalyses the reaction L-homoserine + acetyl-CoA = O-acetyl-L-homoserine + CoA. Its pathway is amino-acid biosynthesis; L-methionine biosynthesis via de novo pathway; O-acetyl-L-homoserine from L-homoserine: step 1/1. In terms of biological role, transfers an acetyl group from acetyl-CoA to L-homoserine, forming acetyl-L-homoserine. The sequence is that of Homoserine O-acetyltransferase from Brevibacillus brevis (strain 47 / JCM 6285 / NBRC 100599).